A 623-amino-acid polypeptide reads, in one-letter code: Transketolase (623 aa).

Met1 is subject to N-acetylmethionine. N6-acetyllysine is present on residues Lys6 and Lys11. His37 provides a ligand contact to substrate. Thiamine diphosphate contacts are provided by Ser40 and His77. Ser104 bears the Phosphoserine mark. 123-125 (GSL) lines the thiamine diphosphate pocket. Residue Lys144 is modified to N6-acetyllysine. Residue Asp155 coordinates Mg(2+). 2 residues coordinate thiamine diphosphate: Gly156 and Asn185. Residues Asn185 and Leu187 each contribute to the Mg(2+) site. N6-acetyllysine is present on residues Lys204, Lys232, and Lys241. Residues Lys244 and His258 each coordinate thiamine diphosphate. Residue His258 coordinates substrate. Lys260 bears the N6-acetyllysine mark. Residue Tyr275 is modified to Phosphotyrosine. Thr287 is subject to Phosphothreonine. Residue Ser295 is modified to Phosphoserine. Arg318 serves as a coordination point for substrate. Residue Lys352 forms a Glycyl lysine isopeptide (Lys-Gly) (interchain with G-Cter in SUMO2) linkage. Catalysis depends on Glu366, which acts as the Proton donor. Residue Phe392 coordinates thiamine diphosphate. Residues His416 and Asp424 each coordinate substrate. Gln428 provides a ligand contact to thiamine diphosphate. A substrate-binding site is contributed by Arg474. N6-acetyllysine occurs at positions 538 and 603.

The protein belongs to the transketolase family. Homodimer. Mg(2+) is required as a cofactor. It depends on Ca(2+) as a cofactor. Mn(2+) serves as cofactor. Requires Co(2+) as cofactor. The cofactor is thiamine diphosphate.

It carries out the reaction D-sedoheptulose 7-phosphate + D-glyceraldehyde 3-phosphate = aldehydo-D-ribose 5-phosphate + D-xylulose 5-phosphate. Catalyzes the transfer of a two-carbon ketol group from a ketose donor to an aldose acceptor, via a covalent intermediate with the cofactor thiamine pyrophosphate. The polypeptide is Transketolase (TKT) (Pongo abelii (Sumatran orangutan)).